Reading from the N-terminus, the 161-residue chain is Large-conductance mechanosensitive channel (161 aa).

A run of 2 helical transmembrane segments spans residues valine 14–leucine 34 and glycine 85–valine 105.

It belongs to the MscL family. As to quaternary structure, homopentamer.

The protein resides in the cell inner membrane. Channel that opens in response to stretch forces in the membrane lipid bilayer. May participate in the regulation of osmotic pressure changes within the cell. This Chlorobium luteolum (strain DSM 273 / BCRC 81028 / 2530) (Pelodictyon luteolum) protein is Large-conductance mechanosensitive channel.